The following is a 1143-amino-acid chain: Disease resistance protein Pikm1-TS (1143 aa).

The segment at 1 to 190 is structured coiled coil (CC) domain; the sequence is MEAAAMAVTA…PLRIMGGEMQ (190 aa). The region spanning 189-258 is the HMA domain; sequence MQKIVFKIPM…KVGPAMFLEV (70 aa). Residues 191–264 form an HMA-like domain region; sequence KIVFKIPMVD…FLEVSQVKED (74 aa). One can recognise an NB-ARC domain in the interval 282 to 570; the sequence is HEVKTICILG…WIAEGFVSEE (289 aa). 10 LRR repeats span residues 681–706, 708–731, 732–754, 756–777, 778–800, 802–823, 824–848, 945–968, 979–1002, and 1004–1027; these read FKRL…ICEQ, SLRV…MRKL, KHLE…IGEL, HLRI…IREL, QHLH…VGKL, NLKI…IGEL, NHLQ…QISQ, MPNL…INGT, DSRV…EFKF, and AGPA…VFRC.

This sequence belongs to the disease resistance NB-LRR family. In terms of assembly, interacts with AVR-Pik through its N-terminal part containing the HMA-like domain. As to expression, constitutively expressed.

In terms of biological role, disease resistance (R) protein that specifically recognizes the AVR-Pik effector avirulence protein from M.oryzae. Resistance proteins guard the plant against pathogens that contain an appropriate avirulence protein via an indirect interaction with this avirulence protein. That triggers a defense system including the hypersensitive response, which restricts the pathogen growth. Contribution of Pikm-2 is required to recognize the effector avirulence protein AVR-Pik. The polypeptide is Disease resistance protein Pikm1-TS (Oryza sativa subsp. japonica (Rice)).